The chain runs to 265 residues: Putative carbamate hydrolase RutD (265 aa).

Residues 21–123 (PILLSAGMGG…TIVNGWARAD (103 aa)) form the AB hydrolase-1 domain.

The protein belongs to the AB hydrolase superfamily. Hydrolase RutD family.

It catalyses the reaction carbamate + 2 H(+) = NH4(+) + CO2. Its function is as follows. Involved in pyrimidine catabolism. May facilitate the hydrolysis of carbamate, a reaction that can also occur spontaneously. This chain is Putative carbamate hydrolase RutD, found in Azorhizobium caulinodans (strain ATCC 43989 / DSM 5975 / JCM 20966 / LMG 6465 / NBRC 14845 / NCIMB 13405 / ORS 571).